The sequence spans 425 residues: Arogenate dehydratase 5, chloroplastic (425 aa).

Residues 1–38 constitute a chloroplast transit peptide; it reads MQTISPAFSCDLKSVIQPNLTAKKARYSHVNGKRVSVR. The 178-residue stretch at 127–304 folds into the Prephenate dehydratase domain; that stretch reads RVAYQGVPGA…NVTRFLMLAR (178 aa). Residues 320-411 enclose the ACT domain; sequence VFAAQEHKGT…SFLRVLGSYP (92 aa).

As to expression, expressed in roots, leaves, stems, flowers and siliques. More abundant in stems and roots.

The protein resides in the plastid. It localises to the chloroplast stroma. It catalyses the reaction L-arogenate + H(+) = L-phenylalanine + CO2 + H2O. It participates in amino-acid biosynthesis; L-phenylalanine biosynthesis; L-phenylalanine from L-arogenate: step 1/1. Functionally, converts the prephenate produced from the shikimate-chorismate pathway into phenylalanine. The sequence is that of Arogenate dehydratase 5, chloroplastic from Arabidopsis thaliana (Mouse-ear cress).